A 146-amino-acid chain; its full sequence is Hemoglobin subunit beta (146 aa).

Residues 2–146 (QWTAEEKQLI…VAHALARKYH (145 aa)) form the Globin domain. Residues H63 and H92 each coordinate heme b.

The protein belongs to the globin family. In terms of assembly, heterotetramer of two alpha chains and two beta chains. As to expression, red blood cells.

Its function is as follows. Involved in oxygen transport from the lung to the various peripheral tissues. The sequence is that of Hemoglobin subunit beta (HBB) from Passer montanus (Eurasian tree sparrow).